Here is a 207-residue protein sequence, read N- to C-terminus: FMN-dependent NADH:quinone oxidoreductase (207 aa).

Ser10 contacts FMN.

The protein belongs to the azoreductase type 1 family. In terms of assembly, homodimer. It depends on FMN as a cofactor.

It catalyses the reaction 2 a quinone + NADH + H(+) = 2 a 1,4-benzosemiquinone + NAD(+). The catalysed reaction is N,N-dimethyl-1,4-phenylenediamine + anthranilate + 2 NAD(+) = 2-(4-dimethylaminophenyl)diazenylbenzoate + 2 NADH + 2 H(+). In terms of biological role, quinone reductase that provides resistance to thiol-specific stress caused by electrophilic quinones. Functionally, also exhibits azoreductase activity. Catalyzes the reductive cleavage of the azo bond in aromatic azo compounds to the corresponding amines. The chain is FMN-dependent NADH:quinone oxidoreductase from Shouchella clausii (strain KSM-K16) (Alkalihalobacillus clausii).